Reading from the N-terminus, the 311-residue chain is tRNA dimethylallyltransferase (311 aa).

9 to 16 (GPTAVGKT) is an ATP binding site. 11–16 (TAVGKT) provides a ligand contact to substrate. Residues 34 to 37 (DSMQ) form an interaction with substrate tRNA region.

It belongs to the IPP transferase family. As to quaternary structure, monomer. Requires Mg(2+) as cofactor.

It catalyses the reaction adenosine(37) in tRNA + dimethylallyl diphosphate = N(6)-dimethylallyladenosine(37) in tRNA + diphosphate. In terms of biological role, catalyzes the transfer of a dimethylallyl group onto the adenine at position 37 in tRNAs that read codons beginning with uridine, leading to the formation of N6-(dimethylallyl)adenosine (i(6)A). This Clostridium botulinum (strain Loch Maree / Type A3) protein is tRNA dimethylallyltransferase.